The primary structure comprises 150 residues: Early 4 ORF6/7 control protein (150 aa).

A disordered region spans residues 1 to 31 (MTTSGVPFGMTLRPTRSRLSRRTPYSRDRLP). Positions 1-58 (MTTSGVPFGMTLRPTRSRLSRRTPYSRDRLPPFETETRATILEDHPLLPECNTLTMHN) match the Nuclear localization signal motif.

Belongs to the adenoviridae E4-orf6/7 family. As to quaternary structure, interacts with host E2F proteins.

Its subcellular location is the host nucleus. Its function is as follows. Modulates viral and host transcriptional activity to promote viral genome replication. Stimulates viral E2a promoter activity by binding and inducing dimerization of host E2F. During viral infection E1A protein binds to cellular retinablastoma (RB) family members and dissociates these repressors from a complex with E2F proteins. Free E2F is then bound to E4orf6/7 which leads to transactivation of viral E2 promoter, and cellular promoters such as E2F-1 promoter. Activation of cellular E2F targets promote cell cycle S phase and thereby possibly favorises viral DNA replication process. The sequence is that of Early 4 ORF6/7 control protein from Human adenovirus C serotype 2 (HAdV-2).